The primary structure comprises 195 residues: Glycerol-3-phosphate acyltransferase (195 aa).

5 helical membrane passes run 3–23, 51–71, 79–99, 111–131, and 153–173; these read EAAL…YFFT, GVAL…AWIG, LLVI…FLGF, IILF…LAIV, and LAMG…ALVV.

Belongs to the PlsY family. As to quaternary structure, probably interacts with PlsX.

It is found in the cell membrane. It carries out the reaction an acyl phosphate + sn-glycerol 3-phosphate = a 1-acyl-sn-glycero-3-phosphate + phosphate. It participates in lipid metabolism; phospholipid metabolism. Functionally, catalyzes the transfer of an acyl group from acyl-phosphate (acyl-PO(4)) to glycerol-3-phosphate (G3P) to form lysophosphatidic acid (LPA). This enzyme utilizes acyl-phosphate as fatty acyl donor, but not acyl-CoA or acyl-ACP. This Syntrophomonas wolfei subsp. wolfei (strain DSM 2245B / Goettingen) protein is Glycerol-3-phosphate acyltransferase.